We begin with the raw amino-acid sequence, 448 residues long: MNAQLKQLWTKTLNIIKGELTEVSFNTWIKSISPISMNENTIKLEVPNDFTRGILESRYKDLIINAIKLITSKKYNIEFSITSEEIFNNQQLKPKSSNDNIVVNDEMTSILNPKYTFDSFVIGNSNRFAHAASLAVAESPAKAYNPLFIYGGVGLGKTHLMHAIGHYILQNTPNAKVVYVSSEKFTNELINSIKDDKNEEFRNKYRNVDVLLIDDIQFIAGKERTQEEFFHTFNALYEADKQIILSSDRPPKEIPTLEDRLRSRFEWGLIADIQAPDFETRIAILKKKADVENLDIPNEVMVYIATKIKSNIRELEGALIRIVAYSSLTNREISVDLAAEALKDIISSEQNKQITIELIQDIVCNYFNLKIQELKSSRRTRNIAFPRQIAMYLSRKLTDMSLPKIGEEFGGRDHTTVIHAYEKISNILKKDESLRNVIDDLNKKITNN.

The tract at residues Met-1–Lys-73 is domain I, interacts with DnaA modulators. A domain II region spans residues Lys-73–Ser-109. The interval Ile-110–Ser-326 is domain III, AAA+ region. ATP-binding residues include Gly-154, Gly-156, Lys-157, and Thr-158. The domain IV, binds dsDNA stretch occupies residues Ser-327–Asn-448.

The protein belongs to the DnaA family. In terms of assembly, oligomerizes as a right-handed, spiral filament on DNA at oriC.

It localises to the cytoplasm. Its function is as follows. Plays an essential role in the initiation and regulation of chromosomal replication. ATP-DnaA binds to the origin of replication (oriC) to initiate formation of the DNA replication initiation complex once per cell cycle. Binds the DnaA box (a 9 base pair repeat at the origin) and separates the double-stranded (ds)DNA. Forms a right-handed helical filament on oriC DNA; dsDNA binds to the exterior of the filament while single-stranded (ss)DNA is stabiized in the filament's interior. The ATP-DnaA-oriC complex binds and stabilizes one strand of the AT-rich DNA unwinding element (DUE), permitting loading of DNA polymerase. After initiation quickly degrades to an ADP-DnaA complex that is not apt for DNA replication. Binds acidic phospholipids. The sequence is that of Chromosomal replication initiator protein DnaA from Clostridium novyi (strain NT).